The following is a 309-amino-acid chain: Homoserine kinase (309 aa).

91–101 is a binding site for ATP; sequence PIGSGLGSSAC.

This sequence belongs to the GHMP kinase family. Homoserine kinase subfamily.

The protein resides in the cytoplasm. It catalyses the reaction L-homoserine + ATP = O-phospho-L-homoserine + ADP + H(+). Its pathway is amino-acid biosynthesis; L-threonine biosynthesis; L-threonine from L-aspartate: step 4/5. Catalyzes the ATP-dependent phosphorylation of L-homoserine to L-homoserine phosphate. The chain is Homoserine kinase from Salmonella paratyphi B (strain ATCC BAA-1250 / SPB7).